Consider the following 177-residue polypeptide: CASP-like protein 4D1 (177 aa).

The Cytoplasmic portion of the chain corresponds to 1–20 (MTAPTAPSMAAPPAPSMVSR). A helical transmembrane segment spans residues 21–41 (MTALFLRVLTFAFLMVSLVIM). Residues 42–66 (TTNTGTIEIGIDEFKVRSKDFYSYR) lie on the Extracellular side of the membrane. The chain crosses the membrane as a helical span at residues 67 to 87 (YMLAAIAFGLTYTILQIALTL). Over 88-107 (NHISKRNGAQTSGDGNLVFD) the chain is Cytoplasmic. Residues 108–128 (FYGDKVVSYILATGAAAAFGA) form a helical membrane-spanning segment. Residues 129-153 (TKELKTQLAGLGGDKFFNKGYASAS) lie on the Extracellular side of the membrane. A helical transmembrane segment spans residues 154-174 (LLLLGFVCTAILSVFSSYALP). Topologically, residues 175–177 (KKV) are cytoplasmic.

This sequence belongs to the Casparian strip membrane proteins (CASP) family. Homodimer and heterodimers.

It localises to the cell membrane. This Populus trichocarpa (Western balsam poplar) protein is CASP-like protein 4D1.